A 473-amino-acid chain; its full sequence is Photosystem II CP43 reaction center protein (473 aa).

Positions Met1–Glu14 are excised as a propeptide. At Thr15 the chain carries N-acetylthreonine. Thr15 carries the phosphothreonine modification. 5 helical membrane-spanning segments follow: residues Leu69 to Ala93, Leu134 to Asn155, Lys178 to Thr200, Lys255 to Ser275, and Trp291 to Ala312. Position 367 (Glu367) interacts with [CaMn4O5] cluster. Residues Arg447–Pro471 traverse the membrane as a helical segment.

It belongs to the PsbB/PsbC family. PsbC subfamily. As to quaternary structure, PSII is composed of 1 copy each of membrane proteins PsbA, PsbB, PsbC, PsbD, PsbE, PsbF, PsbH, PsbI, PsbJ, PsbK, PsbL, PsbM, PsbT, PsbX, PsbY, PsbZ, Psb30/Ycf12, at least 3 peripheral proteins of the oxygen-evolving complex and a large number of cofactors. It forms dimeric complexes. Binds multiple chlorophylls and provides some of the ligands for the Ca-4Mn-5O cluster of the oxygen-evolving complex. It may also provide a ligand for a Cl- that is required for oxygen evolution. PSII binds additional chlorophylls, carotenoids and specific lipids. is required as a cofactor.

Its subcellular location is the plastid. It localises to the chloroplast thylakoid membrane. One of the components of the core complex of photosystem II (PSII). It binds chlorophyll and helps catalyze the primary light-induced photochemical processes of PSII. PSII is a light-driven water:plastoquinone oxidoreductase, using light energy to abstract electrons from H(2)O, generating O(2) and a proton gradient subsequently used for ATP formation. The polypeptide is Photosystem II CP43 reaction center protein (Physcomitrium patens (Spreading-leaved earth moss)).